Here is a 128-residue protein sequence, read N- to C-terminus: Mini-ribonuclease 3 (128 aa).

Residue Asp-17 is part of the active site.

This sequence belongs to the MrnC RNase family. Homodimer. The cofactor is Mg(2+).

It is found in the cytoplasm. Its function is as follows. Involved in correct processing of both the 5' and 3' ends of 23S rRNA precursor. Processes 30S rRNA precursor transcript even in absence of ribonuclease 3 (Rnc); Rnc processes 30S rRNA into smaller rRNA precursors. In Streptococcus pneumoniae (strain ATCC BAA-255 / R6), this protein is Mini-ribonuclease 3.